A 370-amino-acid chain; its full sequence is Putative F-box protein At1g47390 (370 aa).

In terms of domain architecture, F-box spans 1–47 (MAPEEKLPCELIEEILSRVPPESLVRFRTVSKKWNALFDDKMFINNH).

This Arabidopsis thaliana (Mouse-ear cress) protein is Putative F-box protein At1g47390.